The following is a 297-amino-acid chain: Bifunctional protein FolD 2 (297 aa).

Residues 173–175 (GKS), serine 198, and isoleucine 239 contribute to the NADP(+) site.

It belongs to the tetrahydrofolate dehydrogenase/cyclohydrolase family. As to quaternary structure, homodimer.

The enzyme catalyses (6R)-5,10-methylene-5,6,7,8-tetrahydrofolate + NADP(+) = (6R)-5,10-methenyltetrahydrofolate + NADPH. It catalyses the reaction (6R)-5,10-methenyltetrahydrofolate + H2O = (6R)-10-formyltetrahydrofolate + H(+). The protein operates within one-carbon metabolism; tetrahydrofolate interconversion. Catalyzes the oxidation of 5,10-methylenetetrahydrofolate to 5,10-methenyltetrahydrofolate and then the hydrolysis of 5,10-methenyltetrahydrofolate to 10-formyltetrahydrofolate. The chain is Bifunctional protein FolD 2 from Sinorhizobium medicae (strain WSM419) (Ensifer medicae).